Consider the following 329-residue polypeptide: Taste receptor type 2 member 102 (329 aa).

The Extracellular segment spans residues 1 to 9 (MNMESVLHN). Residues 10–30 (FATVLIYVEFIFGNLSNGFIV) traverse the membrane as a helical segment. Topologically, residues 31–47 (LSNFLDWVIKQKLSLID) are cytoplasmic. A helical membrane pass occupies residues 48-68 (KILLTLAISRITLIWEIYAWF). Topologically, residues 69–85 (KSLYDPSSFLIGIEFQI) are extracellular. Residues 86–108 (IYFSWVLSSHFSLWLATTLSVFY) form a helical membrane-spanning segment. At 109–129 (LLRIANCSWQIFLYLKWRLKQ) the chain is on the cytoplasmic side. The chain crosses the membrane as a helical span at residues 130–150 (LIVGMLLGSLVFLLGNLMQSM). The Extracellular portion of the chain corresponds to 151 to 181 (LEERFYQYGRNTSVNTMSNDLAMWTELIFFN). N161 carries N-linked (GlcNAc...) asparagine glycosylation. Residues 182–202 (MAMFSVIPFTLALISFLLLIF) form a helical membrane-spanning segment. The Cytoplasmic segment spans residues 203-231 (SLWKHLQKMQLISRRHRDPSTKAHMNALR). Residues 232-252 (IMVSFLLLYTMHFLSLLISWI) form a helical membrane-spanning segment. The Extracellular portion of the chain corresponds to 253–262 (AQKHQSELAD). Residues 263 to 283 (IIGMITELMYPSVHSCILILG) form a helical membrane-spanning segment. At 284–329 (NSKLKQTSLCMLRHLRCRLKGENITIAYSNQITSFCVFCVANKSMR) the chain is on the cytoplasmic side.

This sequence belongs to the G-protein coupled receptor T2R family.

It localises to the membrane. Putative taste receptor which may play a role in the perception of bitterness. The protein is Taste receptor type 2 member 102 of Mus musculus (Mouse).